Reading from the N-terminus, the 107-residue chain is NADH-quinone oxidoreductase subunit K 2 (107 aa).

3 helical membrane-spanning segments follow: residues 3 to 23 (LPIYYPLGLGALLFGLGLWGA), 30 to 50 (VRILMFIEIMLNGVNLNLITF), and 67 to 87 (ILTLFVMTVAAAEASVGLAII).

It belongs to the complex I subunit 4L family. In terms of assembly, NDH-1 is composed of 14 different subunits. Subunits NuoA, H, J, K, L, M, N constitute the membrane sector of the complex.

The protein resides in the cell membrane. It carries out the reaction a quinone + NADH + 5 H(+)(in) = a quinol + NAD(+) + 4 H(+)(out). Its function is as follows. NDH-1 shuttles electrons from NADH, via FMN and iron-sulfur (Fe-S) centers, to quinones in the respiratory chain. The immediate electron acceptor for the enzyme in this species is believed to be a menaquinone. Couples the redox reaction to proton translocation (for every two electrons transferred, four hydrogen ions are translocated across the cytoplasmic membrane), and thus conserves the redox energy in a proton gradient. The chain is NADH-quinone oxidoreductase subunit K 2 from Symbiobacterium thermophilum (strain DSM 24528 / JCM 14929 / IAM 14863 / T).